A 310-amino-acid polypeptide reads, in one-letter code: GPN-loop GTPase 2 (310 aa).

The residue at position 2 (Ala-2) is an N-acetylalanine. Residue 19–24 (GSGKTT) coordinates GTP. The Gly-Pro-Asn (GPN)-loop; involved in dimer interface motif lies at 76 to 78 (GPN). 178–181 (SKMD) is a GTP binding site.

The protein belongs to the GPN-loop GTPase family. Heterodimers with GPN1 or GPN3. Binds to RNA polymerase II (RNAPII).

Its function is as follows. Small GTPase required for proper localization of RNA polymerase II and III (RNAPII and RNAPIII). May act at an RNAP assembly step prior to nuclear import. The chain is GPN-loop GTPase 2 from Mus musculus (Mouse).